We begin with the raw amino-acid sequence, 790 residues long: Cadherin-6 (790 aa).

The signal sequence occupies residues 1–18 (MRTYRYFLLLFWVGQPYP). A propeptide spanning residues 19–53 (TFSTPLSKRTSGFPAKKRTLELSGNSKNELSRSKR) is cleaved from the precursor. Cadherin domains lie at 54–159 (SWMW…EPIF), 160–268 (TKEV…PPRF), 269–383 (PQST…PPVF), 384–486 (SKLA…DNPP), and 487–608 (EFAE…LVHP). At 54-615 (SWMWNQFFLL…VHPTGLSTGA (562 aa)) the chain is on the extracellular side. Asparagine 255 is a glycosylation site (N-linked (GlcNAc...) asparagine). The segment at 261–291 (VNDNPPRFPQSTYQFKTPESSPPGTPIGRIK) is disordered. The span at 269–279 (PQSTYQFKTPE) shows a compositional bias: polar residues. N-linked (GlcNAc...) asparagine glycosylation is found at asparagine 399, asparagine 437, asparagine 455, and asparagine 536. A helical membrane pass occupies residues 616 to 636 (LIAILLCIVTLLVTVVLFAAL). At 637-790 (RRQRKKEPLI…YGGVDSDKDS (154 aa)) the chain is on the cytoplasmic side. Phosphoserine is present on residues serine 786 and serine 790.

It is found in the cell membrane. Its function is as follows. Cadherins are calcium-dependent cell adhesion proteins. They preferentially interact with themselves in a homophilic manner in connecting cells; cadherins may thus contribute to the sorting of heterogeneous cell types. This is Cadherin-6 (CDH6) from Bos taurus (Bovine).